A 357-amino-acid polypeptide reads, in one-letter code: Peptide chain release factor 1 (357 aa).

Gln236 is subject to N5-methylglutamine. Residues 284–293 (RRKKDQERAN) show a composition bias toward basic and acidic residues. The interval 284–313 (RRKKDQERANNRRKQIGSGDRSERIRTYNF) is disordered.

The protein belongs to the prokaryotic/mitochondrial release factor family. In terms of processing, methylated by PrmC. Methylation increases the termination efficiency of RF1.

Its subcellular location is the cytoplasm. Peptide chain release factor 1 directs the termination of translation in response to the peptide chain termination codons UAG and UAA. This chain is Peptide chain release factor 1, found in Rickettsia bellii (strain RML369-C).